A 323-amino-acid chain; its full sequence is Polycomb complex protein BMI-1-B (323 aa).

An RING-type zinc finger spans residues 18 to 57 (CVLCGGYFIDAATIIECLHSFCKTCIVRYLETSKYCPICD). The Nuclear localization signal motif lies at 81–95 (KLVPGLFKGEMKRRR). The disordered stretch occupies residues 238 to 310 (PHTDRINNTS…HQNPFANRAR (73 aa)). The span at 287-301 (HISSTINGTNSSSSH) shows a compositional bias: low complexity.

In terms of assembly, component of a PRC1-like complex. Interacts with cbx4.

The protein resides in the nucleus. Component of a Polycomb group (PcG) multiprotein PRC1-like complex, a complex class required to maintain the transcriptionally repressive state of many genes, including Hox genes, throughout development. PcG PRC1 complex acts via chromatin remodeling and modification of histones; it mediates monoubiquitination of histone H2A 'Lys-119', rendering chromatin heritably changed in its expressibility. In the PRC1 complex, it is required to stimulate the E3 ubiquitin-protein ligase activity of rnf2. This chain is Polycomb complex protein BMI-1-B (bmi1b), found in Xenopus laevis (African clawed frog).